A 738-amino-acid polypeptide reads, in one-letter code: Ethylene receptor 1 (738 aa).

3 helical membrane passes run 23–43 (ISDF…IYFV), 53–73 (WVLV…LINL), and 92–112 (VLTA…IPDL). Cysteine 65 and histidine 69 together coordinate Cu cation. Residues 158–307 (DRHTILKTTL…VVADQVAVAL (150 aa)) form the GAF domain. The Histidine kinase domain occupies 350-585 (VMNHEMRTPM…IFDVKLGISE (236 aa)). A Phosphohistidine; by autocatalysis modification is found at histidine 353. ADP contacts are provided by residues 470 to 473 (NAVK), aspartate 513, lysine 529, serine 544, and leucine 548. Positions 611–729 (KVLVMDENGV…NIRDVLSDLL (119 aa)) constitute a Response regulatory domain. The residue at position 659 (aspartate 659) is a 4-aspartylphosphate. Residue lysine 714 forms a Glycyl lysine isopeptide (Lys-Gly) (interchain with G-Cter in ubiquitin) linkage.

Belongs to the ethylene receptor family. As to quaternary structure, homodimer; disulfide-linked. Heteromer with ERS1, ERS2, ETR2 and EIN4. Interacts with AHP1, AHP2 and AHP3. Interacts with RTE1. Interacts with EIN2. The cofactor is Cu cation. Autophosphorylated. Phosphorylation at His-353 modulates the interaction with EIN2. Leaves, roots, stems, seedlings, flowers, anthers, carpels and ovules.

The protein localises to the endoplasmic reticulum membrane. It carries out the reaction ATP + protein L-histidine = ADP + protein N-phospho-L-histidine.. Ethylene receptor related to bacterial two-component regulators. Acts as a redundant negative regulator of ethylene signaling. In the presence of ethylene, the auto-kinase activity of ETR1 is inhibited and the non-phosphorylated kinase domain binds tightly to the corresponding domain of EIN2. The sequence is that of Ethylene receptor 1 from Arabidopsis thaliana (Mouse-ear cress).